Here is a 100-residue protein sequence, read N- to C-terminus: NADH-quinone oxidoreductase subunit K (100 aa).

3 helical membrane passes run 4–24 (LQHG…GLII), 29–49 (LFML…FVVV), and 60–80 (VMFI…LALL).

This sequence belongs to the complex I subunit 4L family. As to quaternary structure, NDH-1 is composed of 13 different subunits. Subunits NuoA, H, J, K, L, M, N constitute the membrane sector of the complex.

The protein localises to the cell inner membrane. The catalysed reaction is a quinone + NADH + 5 H(+)(in) = a quinol + NAD(+) + 4 H(+)(out). Its function is as follows. NDH-1 shuttles electrons from NADH, via FMN and iron-sulfur (Fe-S) centers, to quinones in the respiratory chain. The immediate electron acceptor for the enzyme in this species is believed to be ubiquinone. Couples the redox reaction to proton translocation (for every two electrons transferred, four hydrogen ions are translocated across the cytoplasmic membrane), and thus conserves the redox energy in a proton gradient. The polypeptide is NADH-quinone oxidoreductase subunit K (Photorhabdus laumondii subsp. laumondii (strain DSM 15139 / CIP 105565 / TT01) (Photorhabdus luminescens subsp. laumondii)).